The sequence spans 139 residues: Large ribosomal subunit protein bL21 (139 aa).

The protein belongs to the bacterial ribosomal protein bL21 family. Part of the 50S ribosomal subunit. Contacts protein L20.

In terms of biological role, this protein binds to 23S rRNA in the presence of protein L20. This chain is Large ribosomal subunit protein bL21, found in Prochlorococcus marinus (strain NATL1A).